The chain runs to 317 residues: Dehydrogenase/reductase SDR family member 12 (317 aa).

Residues S50 and I52 each contribute to the NAD(+) site. Position 175 (S175) interacts with substrate. Residues Y201, K205, and T234 each coordinate NAD(+). The active-site Proton acceptor is the Y201.

It belongs to the short-chain dehydrogenases/reductases (SDR) family.

In terms of biological role, putative oxidoreductase. The sequence is that of Dehydrogenase/reductase SDR family member 12 (DHRS12) from Bos taurus (Bovine).